A 234-amino-acid chain; its full sequence is Phosphoribosylaminoimidazole-succinocarboxamide synthase (234 aa).

The protein belongs to the SAICAR synthetase family.

It catalyses the reaction 5-amino-1-(5-phospho-D-ribosyl)imidazole-4-carboxylate + L-aspartate + ATP = (2S)-2-[5-amino-1-(5-phospho-beta-D-ribosyl)imidazole-4-carboxamido]succinate + ADP + phosphate + 2 H(+). Its pathway is purine metabolism; IMP biosynthesis via de novo pathway; 5-amino-1-(5-phospho-D-ribosyl)imidazole-4-carboxamide from 5-amino-1-(5-phospho-D-ribosyl)imidazole-4-carboxylate: step 1/2. In Staphylococcus aureus (strain COL), this protein is Phosphoribosylaminoimidazole-succinocarboxamide synthase.